A 274-amino-acid polypeptide reads, in one-letter code: RsbT co-antagonist protein RsbRA (274 aa).

One can recognise an STAS domain in the interval 150-265 (SAPLIPVFEN…KGIQTALEMT (116 aa)). T171 and T205 each carry phosphothreonine.

In terms of assembly, interacts with RsbRB and RsbS in the stressosome. The stressosome probably also contains RsbRC and RsbRD. In terms of processing, phosphorylated by RsbT. This threonine phosphorylation abrogates the ability of RsbRA to stimulate RsbT in vitro.

Its function is as follows. Acts as a positive regulator of sigma-B activity in response to salt and heat stress by stimulating the activity of the RsbT kinase toward RsbS in vitro. In terms of biological role, one of 4 functionally non-identical RsbR paralogs, it functions in the environmental signaling branch of the general stress response. Functionally, negative regulator of sigma-B activity. Non-phosphorylated RsbS binds to RsbT, preventing its association with RsbU. Requires any one of RsbRA, RsbRB, RsbRC or RsbRD to sequester RsbT. When RsbS and the RsbR paralog(s) are phosphorylated, they release RsbT, which can then bind and activate RsbU. The sequence is that of RsbT co-antagonist protein RsbRA (rsbRA) from Bacillus subtilis (strain 168).